A 417-amino-acid chain; its full sequence is Cell division protein FtsA (417 aa).

It belongs to the FtsA/MreB family. Self-interacts. Interacts with FtsZ.

It is found in the cell inner membrane. Its function is as follows. Cell division protein that is involved in the assembly of the Z ring. May serve as a membrane anchor for the Z ring. The polypeptide is Cell division protein FtsA (Pseudomonas aeruginosa (strain ATCC 15692 / DSM 22644 / CIP 104116 / JCM 14847 / LMG 12228 / 1C / PRS 101 / PAO1)).